Here is a 1401-residue protein sequence, read N- to C-terminus: DNA polymerase III PolC-type (1401 aa).

The Exonuclease domain maps to 388 to 543 (FVVFDIETTG…EDAKATAEIF (156 aa)).

The protein belongs to the DNA polymerase type-C family. PolC subfamily.

The protein localises to the cytoplasm. It carries out the reaction DNA(n) + a 2'-deoxyribonucleoside 5'-triphosphate = DNA(n+1) + diphosphate. Required for replicative DNA synthesis. This DNA polymerase also exhibits 3' to 5' exonuclease activity. This Caldanaerobacter subterraneus subsp. tengcongensis (strain DSM 15242 / JCM 11007 / NBRC 100824 / MB4) (Thermoanaerobacter tengcongensis) protein is DNA polymerase III PolC-type.